A 524-amino-acid polypeptide reads, in one-letter code: 5'-AMP-activated protein kinase subunit gamma-2 (524 aa).

Residues 1-178 are disordered; it reads MPLLDGDLEG…TRPPLASPTH (178 aa). Phosphoserine occurs at positions 21, 27, 29, 46, 94, 99, 117, and 118. Residues 112 to 123 are compositionally biased toward low complexity; sequence TSGLSSSPSTPT. Thr121 bears the Phosphothreonine mark. Over residues 135–145 the composition is skewed to basic and acidic residues; sequence SYKHEPERLEN. Residues 148–168 are compositionally biased toward polar residues; sequence YASSSPPDTGQRFCPSSFQSP. Position 152 is a phosphoserine (Ser152). 3 CBS domains span residues 230–290, 312–370, and 385–447; these read PTSS…KSPM, TFKP…MSDM, and IGTY…NLDI. ADP contacts are provided by residues Arg257, 272–277, Val317, 338–339, and Lys357; these read MLTITD and HR. AMP contacts are provided by residues Arg257, 272-277, Val317, His338, 338-339, Lys357, Thr387, Ala392, 413-414, 429-432, Arg456, His485, 485-486, and 501-504; these read MLTITD, HR, SA, SKFD, and SLSD. ATP is bound by residues Arg257, 272–277, Val317, 338–339, Arg339, and Lys357; these read MLTITD and HR. The AMPK pseudosubstrate signature appears at 325-346; it reads LLDAVYSLIKNKIHRLPVIDPI. Residues 429–432, Arg456, and 485–486 contribute to the ADP site; these read SKFD and HR. Residues 429–432, Arg456, and 485–486 each bind ATP; these read SKFD and HR. The CBS 4 domain maps to 459 to 517; sequence YFEGVVKCNKLEILETIVDRIVRAEVHRLVVANEADSIVGIISLSDILQALILTPAGAK.

The protein belongs to the 5'-AMP-activated protein kinase gamma subunit family. As to quaternary structure, AMPK is a heterotrimer of an alpha catalytic subunit (PRKAA1 or PRKAA2), a beta (PRKAB1 or PRKAB2) and a gamma non-catalytic subunits (PRKAG1, PRKAG2 or PRKAG3). Interacts with FNIP1 and FNIP2. In terms of processing, phosphorylated by ULK1; leading to negatively regulate AMPK activity and suggesting the existence of a regulatory feedback loop between ULK1 and AMPK. Post-translationally, glycosylated; O-GlcNAcylated by OGT, promoting the AMP-activated protein kinase (AMPK) activity.

In terms of biological role, AMP/ATP-binding subunit of AMP-activated protein kinase (AMPK), an energy sensor protein kinase that plays a key role in regulating cellular energy metabolism. In response to reduction of intracellular ATP levels, AMPK activates energy-producing pathways and inhibits energy-consuming processes: inhibits protein, carbohydrate and lipid biosynthesis, as well as cell growth and proliferation. AMPK acts via direct phosphorylation of metabolic enzymes, and by longer-term effects via phosphorylation of transcription regulators. Also acts as a regulator of cellular polarity by remodeling the actin cytoskeleton; probably by indirectly activating myosin. Gamma non-catalytic subunit mediates binding to AMP, ADP and ATP, leading to activate or inhibit AMPK: AMP-binding results in allosteric activation of alpha catalytic subunit (PRKAA1 or PRKAA2) both by inducing phosphorylation and preventing dephosphorylation of catalytic subunits. ADP also stimulates phosphorylation, without stimulating already phosphorylated catalytic subunit. ATP promotes dephosphorylation of catalytic subunit, rendering the AMPK enzyme inactive. The polypeptide is 5'-AMP-activated protein kinase subunit gamma-2 (PRKAG2) (Pongo abelii (Sumatran orangutan)).